Consider the following 685-residue polypeptide: tRNA-dihydrouridine(47) synthase [NAD(P)(+)]-like (685 aa).

Residues 1–12 are compositionally biased toward low complexity; it reads MAATAAAAAAAP. Disordered regions lie at residues 1 to 91, 209 to 234, and 257 to 314; these read MAAT…SSSH, AAND…PLCN, and LIDN…SCRT. Pro residues predominate over residues 13 to 29; it reads PADPPDSSPAASSPPRP. The segment at 87 to 118 adopts a C3H1-type zinc-finger fold; the sequence is KSSSHLCIEVGKSGNVSSCKYGDSCRFSHDID. 2 stretches are compositionally biased toward basic and acidic residues: residues 209 to 221 and 273 to 284; these read AAND…HDNL and SKVESDEIDKHG. Residues 287–314 are compositionally biased toward polar residues; sequence TLNTNTESEDPNLSNGLEPSNNSSSCRT. Residues 338-340 and Gln-392 contribute to the FMN site; that span reads PLT. Cys-423 functions as the Proton donor in the catalytic mechanism. FMN is bound by residues Lys-462, His-492, 525–527, and 550–551; these read NGD and AR.

The protein belongs to the Dus family. Dus3 subfamily. Requires FMN as cofactor.

The catalysed reaction is 5,6-dihydrouridine(47) in tRNA + NAD(+) = uridine(47) in tRNA + NADH + H(+). It catalyses the reaction 5,6-dihydrouridine(47) in tRNA + NADP(+) = uridine(47) in tRNA + NADPH + H(+). The enzyme catalyses a 5,6-dihydrouridine in mRNA + NAD(+) = a uridine in mRNA + NADH + H(+). It carries out the reaction a 5,6-dihydrouridine in mRNA + NADP(+) = a uridine in mRNA + NADPH + H(+). Functionally, catalyzes the synthesis of dihydrouridine, a modified base found in the D-loop of most tRNAs. Specifically modifies U47 in cytoplasmic tRNAs. Catalyzes the synthesis of dihydrouridine in some mRNAs, thereby affecting their translation. The sequence is that of tRNA-dihydrouridine(47) synthase [NAD(P)(+)]-like from Oryza sativa subsp. japonica (Rice).